A 406-amino-acid polypeptide reads, in one-letter code: Bifunctional enzyme Fae/Hps (406 aa).

The tract at residues 1-164 (MSDIYEIGEA…AEKDRGTHPI (164 aa)) is formaldehyde-activating enzyme. His20 (proton donor) is an active-site residue. Substrate is bound by residues Asp22, Leu51, Lys69, Thr71, and Gln86. The 3-hexulose-6-phosphate synthase stretch occupies residues 165 to 406 (MGFKAMKLWN…RLALDEDEKI (242 aa)).

This sequence in the N-terminal section; belongs to the formaldehyde-activating enzyme family. The protein in the C-terminal section; belongs to the HPS/KGPDC family. HPS subfamily.

The enzyme catalyses 5,6,7,8-tetrahydromethanopterin + formaldehyde = 5,10-methylenetetrahydromethanopterin + H2O. The catalysed reaction is D-ribulose 5-phosphate + formaldehyde = D-arabino-hex-3-ulose 6-phosphate. It functions in the pathway carbohydrate biosynthesis; D-ribose 5-phosphate biosynthesis. Catalyzes the condensation of formaldehyde with tetrahydromethanopterin (H(4)MPT) to 5,10-methylenetetrahydromethanopterin. In terms of biological role, catalyzes the reversible formation of ribulose-5-phosphate and formaldehyde from 3-hexulose-6-phosphate. The chain is Bifunctional enzyme Fae/Hps from Methanosphaera stadtmanae (strain ATCC 43021 / DSM 3091 / JCM 11832 / MCB-3).